A 303-amino-acid polypeptide reads, in one-letter code: Methionyl-tRNA formyltransferase (303 aa).

Position 111–114 (111–114 (SLLP)) interacts with (6S)-5,6,7,8-tetrahydrofolate.

The protein belongs to the Fmt family.

The enzyme catalyses L-methionyl-tRNA(fMet) + (6R)-10-formyltetrahydrofolate = N-formyl-L-methionyl-tRNA(fMet) + (6S)-5,6,7,8-tetrahydrofolate + H(+). Attaches a formyl group to the free amino group of methionyl-tRNA(fMet). The formyl group appears to play a dual role in the initiator identity of N-formylmethionyl-tRNA by promoting its recognition by IF2 and preventing the misappropriation of this tRNA by the elongation apparatus. The protein is Methionyl-tRNA formyltransferase of Ehrlichia canis (strain Jake).